Consider the following 310-residue polypeptide: Elongation factor Ts (310 aa).

The segment at 80–83 is involved in Mg(2+) ion dislocation from EF-Tu; it reads TDFV.

It belongs to the EF-Ts family.

The protein localises to the cytoplasm. Its function is as follows. Associates with the EF-Tu.GDP complex and induces the exchange of GDP to GTP. It remains bound to the aminoacyl-tRNA.EF-Tu.GTP complex up to the GTP hydrolysis stage on the ribosome. This Methylocella silvestris (strain DSM 15510 / CIP 108128 / LMG 27833 / NCIMB 13906 / BL2) protein is Elongation factor Ts.